A 421-amino-acid chain; its full sequence is Histidine--tRNA ligase (421 aa).

This sequence belongs to the class-II aminoacyl-tRNA synthetase family. As to quaternary structure, homodimer.

It localises to the cytoplasm. It carries out the reaction tRNA(His) + L-histidine + ATP = L-histidyl-tRNA(His) + AMP + diphosphate + H(+). This chain is Histidine--tRNA ligase, found in Alkaliphilus oremlandii (strain OhILAs) (Clostridium oremlandii (strain OhILAs)).